An 80-amino-acid chain; its full sequence is Small ribosomal subunit protein bS18 (80 aa).

The protein belongs to the bacterial ribosomal protein bS18 family. In terms of assembly, part of the 30S ribosomal subunit. Forms a tight heterodimer with protein bS6.

Its function is as follows. Binds as a heterodimer with protein bS6 to the central domain of the 16S rRNA, where it helps stabilize the platform of the 30S subunit. This Staphylococcus epidermidis (strain ATCC 35984 / DSM 28319 / BCRC 17069 / CCUG 31568 / BM 3577 / RP62A) protein is Small ribosomal subunit protein bS18.